Here is a 121-residue protein sequence, read N- to C-terminus: Large ribosomal subunit protein bL20 (121 aa).

It belongs to the bacterial ribosomal protein bL20 family.

Functionally, binds directly to 23S ribosomal RNA and is necessary for the in vitro assembly process of the 50S ribosomal subunit. It is not involved in the protein synthesizing functions of that subunit. The polypeptide is Large ribosomal subunit protein bL20 (Wolbachia pipientis subsp. Culex pipiens (strain wPip)).